The primary structure comprises 432 residues: Enolase (432 aa).

Gln163 serves as a coordination point for (2R)-2-phosphoglycerate. Catalysis depends on Glu205, which acts as the Proton donor. Mg(2+) contacts are provided by Asp241, Glu289, and Asp316. (2R)-2-phosphoglycerate contacts are provided by Lys341, Arg370, Ser371, and Lys392. The Proton acceptor role is filled by Lys341.

It belongs to the enolase family. The cofactor is Mg(2+).

It is found in the cytoplasm. The protein localises to the secreted. Its subcellular location is the cell surface. It catalyses the reaction (2R)-2-phosphoglycerate = phosphoenolpyruvate + H2O. The protein operates within carbohydrate degradation; glycolysis; pyruvate from D-glyceraldehyde 3-phosphate: step 4/5. Its function is as follows. Catalyzes the reversible conversion of 2-phosphoglycerate (2-PG) into phosphoenolpyruvate (PEP). It is essential for the degradation of carbohydrates via glycolysis. This chain is Enolase, found in Treponema pallidum (strain Nichols).